Consider the following 160-residue polypeptide: 2-C-methyl-D-erythritol 2,4-cyclodiphosphate synthase (160 aa).

Asp11 and His13 together coordinate a divalent metal cation. 4-CDP-2-C-methyl-D-erythritol 2-phosphate is bound by residues 11-13 and 37-38; these read DVH and HS. Residue His45 participates in a divalent metal cation binding. Residues 59–61 and Arg145 contribute to the 4-CDP-2-C-methyl-D-erythritol 2-phosphate site; that span reads DIG.

This sequence belongs to the IspF family. In terms of assembly, homotrimer. It depends on a divalent metal cation as a cofactor.

The catalysed reaction is 4-CDP-2-C-methyl-D-erythritol 2-phosphate = 2-C-methyl-D-erythritol 2,4-cyclic diphosphate + CMP. It participates in isoprenoid biosynthesis; isopentenyl diphosphate biosynthesis via DXP pathway; isopentenyl diphosphate from 1-deoxy-D-xylulose 5-phosphate: step 4/6. Involved in the biosynthesis of isopentenyl diphosphate (IPP) and dimethylallyl diphosphate (DMAPP), two major building blocks of isoprenoid compounds. Catalyzes the conversion of 4-diphosphocytidyl-2-C-methyl-D-erythritol 2-phosphate (CDP-ME2P) to 2-C-methyl-D-erythritol 2,4-cyclodiphosphate (ME-CPP) with a corresponding release of cytidine 5-monophosphate (CMP). In Neisseria meningitidis serogroup B (strain ATCC BAA-335 / MC58), this protein is 2-C-methyl-D-erythritol 2,4-cyclodiphosphate synthase.